The chain runs to 128 residues: Ribosome-binding factor A (128 aa).

The protein belongs to the RbfA family. As to quaternary structure, monomer. Binds 30S ribosomal subunits, but not 50S ribosomal subunits or 70S ribosomes.

Its subcellular location is the cytoplasm. Functionally, one of several proteins that assist in the late maturation steps of the functional core of the 30S ribosomal subunit. Associates with free 30S ribosomal subunits (but not with 30S subunits that are part of 70S ribosomes or polysomes). Required for efficient processing of 16S rRNA. May interact with the 5'-terminal helix region of 16S rRNA. The chain is Ribosome-binding factor A from Haemophilus influenzae (strain 86-028NP).